A 548-amino-acid polypeptide reads, in one-letter code: Glucose-6-phosphate isomerase (548 aa).

The Proton donor role is filled by E353. Residues H384 and K512 contribute to the active site.

This sequence belongs to the GPI family.

It is found in the cytoplasm. It catalyses the reaction alpha-D-glucose 6-phosphate = beta-D-fructose 6-phosphate. It functions in the pathway carbohydrate biosynthesis; gluconeogenesis. The protein operates within carbohydrate degradation; glycolysis; D-glyceraldehyde 3-phosphate and glycerone phosphate from D-glucose: step 2/4. In terms of biological role, catalyzes the reversible isomerization of glucose-6-phosphate to fructose-6-phosphate. This chain is Glucose-6-phosphate isomerase, found in Pseudoalteromonas translucida (strain TAC 125).